We begin with the raw amino-acid sequence, 174 residues long: Trypsin inhibitor (174 aa).

2 disulfides stabilise this stretch: cysteine 40-cysteine 86 and cysteine 131-cysteine 140.

The protein belongs to the protease inhibitor I3 (leguminous Kunitz-type inhibitor) family. In terms of assembly, heterodimer of an alpha and a beta chain linked by a disulfide bond.

Inhibits trypsin and chymotrypsin with a 1:1 stoichiometry, with dissociation constants of 1.56 nM and 120 nM respectively. Inhibits plasma kallikrein, factor XIIa and plasmin with dissociation constants of 5.0 nM, 150 nM and 18 nM respectively. Does not inhibit factor Xa, thrombin, tissue kallikrein or cysteine proteinases such as papain and bromelain. This is Trypsin inhibitor from Enterolobium contortisiliquum (Pacara earpod tree).